The chain runs to 303 residues: Energy-coupling factor transporter ATP-binding protein EcfA2 (303 aa).

The 244-residue stretch at 17–260 (LSVSNLSCFF…EAFLAHTTII (244 aa)) folds into the ABC transporter domain. 54 to 61 (GDSGSGKS) is a binding site for ATP.

This sequence belongs to the ABC transporter superfamily. Energy-coupling factor EcfA family. Forms a stable energy-coupling factor (ECF) transporter complex composed of 2 membrane-embedded substrate-binding proteins (S component), 2 ATP-binding proteins (A component) and 2 transmembrane proteins (T component).

It localises to the cell membrane. In terms of biological role, ATP-binding (A) component of a common energy-coupling factor (ECF) ABC-transporter complex. Unlike classic ABC transporters this ECF transporter provides the energy necessary to transport a number of different substrates. This is Energy-coupling factor transporter ATP-binding protein EcfA2 from Mycoplasma pneumoniae (strain ATCC 29342 / M129 / Subtype 1) (Mycoplasmoides pneumoniae).